We begin with the raw amino-acid sequence, 464 residues long: tRNA-2-methylthio-N(6)-dimethylallyladenosine synthase (464 aa).

In terms of domain architecture, MTTase N-terminal spans 19–135 (GSYWITTFGC…LENLLGKVDL (117 aa)). [4Fe-4S] cluster contacts are provided by cysteine 28, cysteine 64, cysteine 98, cysteine 170, cysteine 174, and cysteine 177. One can recognise a Radical SAM core domain in the interval 156–393 (RESSICGWVN…NELVETTSKQ (238 aa)). Residues 396 to 464 (ERYLDSIESV…PFSLTGILCL (69 aa)) enclose the TRAM domain.

This sequence belongs to the methylthiotransferase family. MiaB subfamily. In terms of assembly, monomer. Requires [4Fe-4S] cluster as cofactor.

The protein resides in the cytoplasm. It carries out the reaction N(6)-dimethylallyladenosine(37) in tRNA + (sulfur carrier)-SH + AH2 + 2 S-adenosyl-L-methionine = 2-methylsulfanyl-N(6)-dimethylallyladenosine(37) in tRNA + (sulfur carrier)-H + 5'-deoxyadenosine + L-methionine + A + S-adenosyl-L-homocysteine + 2 H(+). Its function is as follows. Catalyzes the methylthiolation of N6-(dimethylallyl)adenosine (i(6)A), leading to the formation of 2-methylthio-N6-(dimethylallyl)adenosine (ms(2)i(6)A) at position 37 in tRNAs that read codons beginning with uridine. The chain is tRNA-2-methylthio-N(6)-dimethylallyladenosine synthase from Prochlorococcus marinus (strain MIT 9215).